A 473-amino-acid polypeptide reads, in one-letter code: Serine carboxypeptidase-like 25 (473 aa).

The first 22 residues, 1-22 (MAMAKLAIFTTLMAILVMTSQG), serve as a signal peptide directing secretion. N-linked (GlcNAc...) asparagine glycans are attached at residues N46 and N143. 3 cysteine pairs are disulfide-bonded: C92–C358, C252–C263, and C288–C326. S185 is an active-site residue. 4 N-linked (GlcNAc...) asparagine glycosylation sites follow: N289, N299, N347, and N367. Residues D395 and H447 contribute to the active site.

This sequence belongs to the peptidase S10 family. In terms of tissue distribution, ubiquitous.

The protein localises to the secreted. Functionally, probable carboxypeptidase. In Arabidopsis thaliana (Mouse-ear cress), this protein is Serine carboxypeptidase-like 25 (SCPL25).